The chain runs to 453 residues: MTQQRQMHLAGFFSAGNVTHAHGAWRHTDASNDFLSGKYYQHIARTLERGKFDLLFLPDGLAVEDSYGDNLDTGVGLGGQGAVALEPASVVATMAAVTEHLGLGATISATYYPPYHVARVFATLDQLSGGRVSWNVVTSLNDAEARNFGINQHLEHDARYDRADEFLEAVKKLWNSWDEDALVLDKAAGVFADPAKVHYVDHHGEWLNVRGPLQVPRSPQGEPVILQAGLSPRGRRFAGKWAEAVFSLAPNLEVMQATYQGIKAEVDAAGRDPDQTKIFTAVMPVLGESQAVAQERLEYLNSLVHPEVGLSTLSSHTGINLAAYPLDTPIKDILRDLQDRNVPTQLHMFAAATHSEELTLAEMGRRYGTNVGFVPQWAGTGEQIADELIRHFEGGAADGFIISPAFLPGSYDEFVDQVVPVLQDRGYFRTEYQGNTLRDHLGLRVPQLQGQPS.

FMN-binding residues include Asp-59, Thr-106, His-156, Tyr-160, and Ser-231.

Belongs to the NtaA/SnaA/DszA monooxygenase family. In terms of assembly, homodimer.

The protein resides in the cytoplasm. The enzyme catalyses dibenzothiophene 5,5-dioxide + FMNH2 + NADH + O2 = 2'-hydroxybiphenyl-2-sulfinate + FMN + NAD(+) + H2O + H(+). Its pathway is sulfur metabolism; dibenzothiophene degradation. Catalyzes the second step of the '4S' desulfurization pathway that removes covalently bound sulfur from dibenzothiophene (DBT) without breaking carbon-carbon bonds. Metabolizes DBT-sulfone (DBTO2 or DBT 5,5-dioxide) to 2-(2'-hydroxyphenyl)benzene sulphinate (HBPS). This is Dibenzothiophene-sulfone monooxygenase from Rhodococcus erythropolis (strain XP).